We begin with the raw amino-acid sequence, 86 residues long: Small ribosomal subunit protein uS15 (86 aa).

The protein belongs to the universal ribosomal protein uS15 family. In terms of assembly, part of the 30S ribosomal subunit. Forms a bridge to the 50S subunit in the 70S ribosome, contacting the 23S rRNA.

In terms of biological role, one of the primary rRNA binding proteins, it binds directly to 16S rRNA where it helps nucleate assembly of the platform of the 30S subunit by binding and bridging several RNA helices of the 16S rRNA. Its function is as follows. Forms an intersubunit bridge (bridge B4) with the 23S rRNA of the 50S subunit in the ribosome. The protein is Small ribosomal subunit protein uS15 of Neorickettsia sennetsu (strain ATCC VR-367 / Miyayama) (Ehrlichia sennetsu).